We begin with the raw amino-acid sequence, 631 residues long: Polyadenylate-binding protein, cytoplasmic and nuclear (631 aa).

Residues 1 to 56 (MSDLQESLEKLSINEKAPQAPADDATPSNTTTLEKESSESAAAAAGEGAGEEGEEA) form a disordered region. 4 RRM domains span residues 58-136 (ASLY…WSQR), 146-223 (GNIF…KHVS), 239-316 (TNVY…RAQK), and 342-419 (VNLF…LAQR). The interval 518 to 545 (GGEFNGPNGQRQQRGAYPPNRNQKGGRP) is disordered. One can recognise a PABC domain in the interval 545–626 (PQRDLAAIIS…ALTAFEEYKK (82 aa)).

This sequence belongs to the polyadenylate-binding protein type-1 family.

The protein localises to the cytoplasm. The protein resides in the nucleus. Functionally, binds the poly(A) tail of mRNA. Appears to be an important mediator of the multiple roles of the poly(A) tail in mRNA biogenesis, stability and translation. In the nucleus, involved in both mRNA cleavage and polyadenylation. Is also required for efficient mRNA export to the cytoplasm. Acts in concert with a poly(A)-specific nuclease (PAN) to affect poly(A) tail shortening, which may occur concomitantly with either nucleocytoplasmic mRNA transport or translational initiation. In the cytoplasm, stimulates translation initiation and regulates mRNA decay through translation termination-coupled poly(A) shortening, probably mediated by PAN. The chain is Polyadenylate-binding protein, cytoplasmic and nuclear (PAB1) from Meyerozyma guilliermondii (strain ATCC 6260 / CBS 566 / DSM 6381 / JCM 1539 / NBRC 10279 / NRRL Y-324) (Yeast).